A 262-amino-acid chain; its full sequence is tRNA (guanine-N(1)-)-methyltransferase (262 aa).

Residues Gly112 and Ile132 to Leu137 contribute to the S-adenosyl-L-methionine site.

The protein belongs to the RNA methyltransferase TrmD family. As to quaternary structure, homodimer.

Its subcellular location is the cytoplasm. It catalyses the reaction guanosine(37) in tRNA + S-adenosyl-L-methionine = N(1)-methylguanosine(37) in tRNA + S-adenosyl-L-homocysteine + H(+). Functionally, specifically methylates guanosine-37 in various tRNAs. The chain is tRNA (guanine-N(1)-)-methyltransferase from Desulfatibacillum aliphaticivorans.